The primary structure comprises 548 residues: Glycosyl hydrolase family 109 protein 3 (548 aa).

The N-terminal stretch at 1-21 (MKLKKLLLSVLMLLSISGLQA) is a signal peptide. NAD(+) contacts are provided by residues 71 to 72 (MR), aspartate 93, 141 to 144 (WNHH), 161 to 162 (EV), and asparagine 190. Substrate is bound at residue tyrosine 219. 240–244 (DNLHW) contributes to the NAD(+) binding site. Substrate is bound by residues arginine 245, 257 to 260 (YATH), and tyrosine 335. Residue tyrosine 257 coordinates NAD(+).

The protein belongs to the Gfo/Idh/MocA family. Glycosyl hydrolase 109 subfamily. NAD(+) serves as cofactor.

In terms of biological role, glycosidase. The protein is Glycosyl hydrolase family 109 protein 3 of Phocaeicola vulgatus (strain ATCC 8482 / DSM 1447 / JCM 5826 / CCUG 4940 / NBRC 14291 / NCTC 11154) (Bacteroides vulgatus).